Consider the following 338-residue polypeptide: Methionine import ATP-binding protein MetN 1 (338 aa).

The 240-residue stretch at 2–241 folds into the ABC transporter domain; sequence IELHQVSKSF…AKHATTKRFV (240 aa). 38 to 45 is a binding site for ATP; sequence GYSGAGKS.

The protein belongs to the ABC transporter superfamily. Methionine importer (TC 3.A.1.24) family. In terms of assembly, the complex is composed of two ATP-binding proteins (MetN), two transmembrane proteins (MetI) and a solute-binding protein (MetQ).

The protein resides in the cell membrane. The catalysed reaction is L-methionine(out) + ATP + H2O = L-methionine(in) + ADP + phosphate + H(+). It carries out the reaction D-methionine(out) + ATP + H2O = D-methionine(in) + ADP + phosphate + H(+). Its function is as follows. Part of the ABC transporter complex MetNIQ involved in methionine import. Responsible for energy coupling to the transport system. This Listeria monocytogenes serovar 1/2a (strain ATCC BAA-679 / EGD-e) protein is Methionine import ATP-binding protein MetN 1.